The chain runs to 210 residues: ATP phosphoribosyltransferase (210 aa).

The protein belongs to the ATP phosphoribosyltransferase family. Short subfamily. In terms of assembly, heteromultimer composed of HisG and HisZ subunits.

The protein resides in the cytoplasm. It carries out the reaction 1-(5-phospho-beta-D-ribosyl)-ATP + diphosphate = 5-phospho-alpha-D-ribose 1-diphosphate + ATP. It participates in amino-acid biosynthesis; L-histidine biosynthesis; L-histidine from 5-phospho-alpha-D-ribose 1-diphosphate: step 1/9. Its function is as follows. Catalyzes the condensation of ATP and 5-phosphoribose 1-diphosphate to form N'-(5'-phosphoribosyl)-ATP (PR-ATP). Has a crucial role in the pathway because the rate of histidine biosynthesis seems to be controlled primarily by regulation of HisG enzymatic activity. The protein is ATP phosphoribosyltransferase of Petrotoga mobilis (strain DSM 10674 / SJ95).